A 306-amino-acid polypeptide reads, in one-letter code: Elongation factor Ts (306 aa).

The interval 80–83 is involved in Mg(2+) ion dislocation from EF-Tu; sequence TDFV.

The protein belongs to the EF-Ts family.

The protein resides in the cytoplasm. Functionally, associates with the EF-Tu.GDP complex and induces the exchange of GDP to GTP. It remains bound to the aminoacyl-tRNA.EF-Tu.GTP complex up to the GTP hydrolysis stage on the ribosome. The polypeptide is Elongation factor Ts (Leptothrix cholodnii (strain ATCC 51168 / LMG 8142 / SP-6) (Leptothrix discophora (strain SP-6))).